The following is a 128-amino-acid chain: Lutropin subunit beta (128 aa).

An N-terminal signal peptide occupies residues 1-20 (MERLQGLLLWLLLSPSVVWA). 5 disulfide bridges follow: Cys29–Cys77, Cys43–Cys92, Cys54–Cys108, Cys58–Cys110, and Cys113–Cys120. A glycan (N-linked (GlcNAc...) asparagine) is linked at Asn33.

The protein belongs to the glycoprotein hormones subunit beta family. As to quaternary structure, heterodimer of a common alpha chain and a unique beta chain which confers biological specificity to thyrotropin, lutropin, follitropin and gonadotropin.

The protein localises to the secreted. Its function is as follows. Promotes spermatogenesis and ovulation by stimulating the testes and ovaries to synthesize steroids. The chain is Lutropin subunit beta (LHB) from Phodopus sungorus (Striped hairy-footed hamster).